Consider the following 277-residue polypeptide: Putative gamma-glutamylcyclotransferase YkqA (277 aa).

8–11 (YGTL) is a binding site for substrate. Glutamate 205 serves as the catalytic Proton acceptor.

It belongs to the gamma-glutamylcyclotransferase family.

In terms of biological role, putative gamma-glutamylcyclotransferase. This chain is Putative gamma-glutamylcyclotransferase YkqA (ykqA), found in Bacillus subtilis (strain 168).